Here is a 637-residue protein sequence, read N- to C-terminus: MAAMAVGGAGGSRVSSGRDLNCVPEIADTLGAVAKQGFDFLCMPVFHPRFKREFTQEPAKSRPGPQTRSDLLLSGRDWNTLIVGKLSPWIRPDSKVEKIRRNSEAAMLQELNFGAYLGLPAFLLPLNQEDNTNLARVLTNHIHTGHHSSMFWMRVPLVAPEDLRDDIIENAPTSHTEEYSGEEKTWMWWHNFRTLCDYSKRIAVALEIGADLPSNHVIDRWLGEPIKAAILPTSIFLTNKKGFPVLSKMHQRLIFRLLKLEVQFIITGTNHHSEKEFCSYLQYLEYLSQNRPPPNAYELFAKGYEDYLQSPLQPLMDNLESQTYEVFEKDPIKYSQYQQAIYKCLLDRVPEEEKDTNIQVLMVLGAGRGPLVNASLRAAKQADRRIKLYAVEKNPNAVVTLENWQFEEWGSQVTVVSSDMREWVAPEKADIIVSELLGSFADNELSPESLDGAQHFLKDDGVSIPGEYTSFLAPISSSKLYNEVRACREKDRDPEAQFEMPYVVRLHNFHQLSAPQPCFTFSHPNRDPMIDNNRYCTLEFPVEVNTVLHGFAGYFETVLYQDITLSIRPETHSPGMFSWFPILFPIKQPITVREGQTICVRFWRCSNSKKVWYEWAVTAPVCSAIHNPTGRSYTIGL.

An N-acetylalanine modification is found at Ala-2. The tract at residues 13–292 (RVSSGRDLNC…YLEYLSQNRP (280 aa)) is TIM barrel. The region spanning 308–615 (LQSPLQPLMD…SNSKKVWYEW (308 aa)) is the SAM-dependent MTase PRMT-type domain. Tyr-324 contributes to the S-adenosyl-L-methionine binding site. Position 327 (Phe-327) interacts with a protein. S-adenosyl-L-methionine is bound by residues 333–334 (KY), Glu-392, and 419–420 (DM). Positions 435 and 444 each coordinate a protein. Catalysis depends on proton donor/acceptor residues Glu-435 and Glu-444. The interval 465–637 (PGEYTSFLAP…PTGRSYTIGL (173 aa)) is beta barrel. A dimerization region spans residues 488 to 494 (REKDRDP).

This sequence belongs to the class I-like SAM-binding methyltransferase superfamily. Protein arginine N-methyltransferase family. As to quaternary structure, forms, at least, homodimers and homotetramers. Component of the methylosome complex, composed of PRMT5, WDR77 and CLNS1A. Found in a complex composed of PRMT5, WDR77 and RIOK1. RIOK1 and CLNS1A associate with PRMT5 in a mutually exclusive fashion, which allows the recruitment of distinct methylation substrates, such as nucleolin/NCL and Sm proteins, respectively. Interacts with PRDM1. Identified in a complex composed of methylosome and PRMT1 and ERH. Interacts with EGFR; methylates EGFR and stimulates EGFR-mediated ERK activation. Interacts with HOXA9. Interacts with SRGAP2. Found in a complex with COPRS, RUNX1 and CBFB. Interacts with CHTOP; the interaction symmetrically methylates CHTOP, but seems to require the presence of PRMT1. Interacts with EPB41L3; this modulates methylation of target proteins. Component of a high molecular weight E2F-pocket protein complex, CERC (cyclin E1 repressor complex). Associates with SWI/SNF remodeling complexes containing SMARCA2 and SMARCA4. Interacts with JAK2, SSTR1, SUPT5H, BRAF and with active RAF1. Interacts with LSM11, PRMT7 and SNRPD3. Interacts with COPRS; promoting its recruitment on histone H4. Interacts with CLNS1A/pICln. Identified in a complex with CLNS1A/pICln and Sm proteins. Interacts with RPS10. Interacts with WDR77. Interacts with IWS1. Interacts with CRY1. Interacts with POLR2A. Interacts with SMN1/SMN2. Interacts with LYAR; this interaction is direct. Interacts with TTC5/STRAP; this interaction is DNA damage-dependent and promotes PRMT5 interaction with p53/TP53. Interacts with p53/TP53 in response to DNA damage; the interaction is TTC5/STRAP dependent. Interacts with FAM47E; the interaction is direct, promotes PRMT5 localization to chromatin, and does not disrupt its association with WDR77 or STUB1. Interacts with TDRD6. Interacts with STUB1. Interacts with MBD2. Does not interact with MBD3.

The protein resides in the cytoplasm. It is found in the nucleus. Its subcellular location is the golgi apparatus. It catalyses the reaction L-arginyl-[protein] + 2 S-adenosyl-L-methionine = N(omega),N(omega)'-dimethyl-L-arginyl-[protein] + 2 S-adenosyl-L-homocysteine + 2 H(+). Activity is increased by EGF, HGF, FGF1 or FGF2 treatments, and slightly decreased by NGF treatment. Functionally, arginine methyltransferase that can both catalyze the formation of omega-N monomethylarginine (MMA) and symmetrical dimethylarginine (sDMA), with a preference for the formation of MMA. Specifically mediates the symmetrical dimethylation of arginine residues in the small nuclear ribonucleoproteins Sm D1 (SNRPD1) and Sm D3 (SNRPD3); such methylation being required for the assembly and biogenesis of snRNP core particles. Methylates SUPT5H and may regulate its transcriptional elongation properties. May methylate the N-terminal region of MBD2. Mono- and dimethylates arginine residues of myelin basic protein (MBP) in vitro. May play a role in cytokine-activated transduction pathways. Negatively regulates cyclin E1 promoter activity and cellular proliferation. Methylates histone H2A and H4 'Arg-3' during germ cell development. Methylates histone H3 'Arg-8', which may repress transcription. Methylates the Piwi proteins (PIWIL1, PIWIL2 and PIWIL4), methylation of Piwi proteins being required for the interaction with Tudor domain-containing proteins and subsequent localization to the meiotic nuage. Methylates RPS10. Attenuates EGF signaling through the MAPK1/MAPK3 pathway acting at 2 levels. First, monomethylates EGFR; this enhances EGFR 'Tyr-1197' phosphorylation and PTPN6 recruitment, eventually leading to reduced SOS1 phosphorylation. Second, methylates RAF1 and probably BRAF, hence destabilizing these 2 signaling proteins and reducing their catalytic activity. Required for induction of E-selectin and VCAM-1, on the endothelial cells surface at sites of inflammation. Methylates HOXA9. Methylates and regulates SRGAP2 which is involved in cell migration and differentiation. Acts as a transcriptional corepressor in CRY1-mediated repression of the core circadian component PER1 by regulating the H4R3 dimethylation at the PER1 promoter. Methylates GM130/GOLGA2, regulating Golgi ribbon formation. Methylates H4R3 in genes involved in glioblastomagenesis in a CHTOP- and/or TET1-dependent manner. Symmetrically methylates POLR2A, a modification that allows the recruitment to POLR2A of proteins including SMN1/SMN2 and SETX. This is required for resolving RNA-DNA hybrids created by RNA polymerase II, that form R-loop in transcription terminal regions, an important step in proper transcription termination. Along with LYAR, binds the promoter of gamma-globin HBG1/HBG2 and represses its expression. Symmetrically methylates NCL. Methylates p53/TP53; methylation might possibly affect p53/TP53 target gene specificity. Involved in spliceosome maturation and mRNA splicing in prophase I spermatocytes through the catalysis of the symmetrical arginine dimethylation of SNRPB (small nuclear ribonucleoprotein-associated protein) and the interaction with tudor domain-containing protein TDRD6. This is Protein arginine N-methyltransferase 5 (PRMT5) from Bos taurus (Bovine).